The following is a 468-amino-acid chain: Tumor necrosis factor receptor superfamily member 10A (468 aa).

The first 23 residues, 1–23 (MAPPPARVHLGAFLAVTPNPGSA), serve as a signal peptide directing secretion. Residues 17–82 (TPNPGSAASG…APGPRPAREA (66 aa)) are disordered. Low complexity predominate over residues 20-34 (PGSAASGTEAAAATP). The Extracellular segment spans residues 24 to 239 (ASGTEAAAAT…VHKESGNGHN (216 aa)). Position 52 is an omega-N-methylarginine (Arg52). Positions 63–74 (GPSARARAGRAP) are enriched in low complexity. TNFR-Cys repeat units lie at residues 107–145 (SAAT…PGAC), 147–188 (RCTE…NTAC), and 189–229 (QCKP…DIEC). 7 disulfides stabilise this stretch: Cys132–Cys145, Cys148–Cys164, Cys167–Cys180, Cys170–Cys188, Cys190–Cys204, Cys207–Cys221, and Cys211–Cys229. Residue Asn156 is glycosylated (N-linked (GlcNAc...) asparagine). A helical transmembrane segment spans residues 240–262 (IWVILVVTLVVPLLLVAVLIVCC). The Cytoplasmic portion of the chain corresponds to 263–468 (CIGSGCGGDP…DGTGSAVSLE (206 aa)). Residues 365 to 448 (MLFFDKFANI…HAREKIQDLL (84 aa)) enclose the Death domain. Ser424, Ser463, and Ser466 each carry phosphoserine.

As to quaternary structure, monomer. Homooligomers and heterooligomers with TNFRSF10B. Three TNFRSF10A molecules interact with the TNFSF10 homotrimer. Can interact with TRADD and RIPK1. Interacts with ARAP1. In the absence of stimulation, interacts with BIRC2, DDX3X and GSK3B. The interaction with BIRC2 and DDX3X is further enhanced upon receptor stimulation and accompanied by DDX3X and BIRC2 cleavage. Interacts with ZDHHC3. Interacts with PTPN6; this interaction enables the inhibition of T-cell receptor signaling via LCK. (Microbial infection) Interacts with HCMV protein UL141; this interaction prevents TNFRSF10A cell surface expression. Post-translationally, palmitoylated. Palmitoylation of TNFRSF10A is required for its association with lipid rafts, oligomerization and function in TRAIL-induced cell death. Palmitoylated by ZDHHC3. In terms of tissue distribution, widely expressed. High levels are found in spleen, peripheral blood leukocytes, small intestine and thymus, but also in K-562 erythroleukemia cells, MCF-7 breast carcinoma cells and activated T-cells.

Its subcellular location is the cell membrane. The protein resides in the membrane raft. It localises to the cytoplasm. It is found in the cytosol. Receptor for the cytotoxic ligand TNFSF10/TRAIL. The adapter molecule FADD recruits caspase-8 to the activated receptor. The resulting death-inducing signaling complex (DISC) performs caspase-8 proteolytic activation which initiates the subsequent cascade of caspases (aspartate-specific cysteine proteases) mediating apoptosis. Promotes the activation of NF-kappa-B. This chain is Tumor necrosis factor receptor superfamily member 10A (TNFRSF10A), found in Homo sapiens (Human).